Here is a 159-residue protein sequence, read N- to C-terminus: 2-C-methyl-D-erythritol 2,4-cyclodiphosphate synthase (159 aa).

D9 and H11 together coordinate a divalent metal cation. Residues D9 to H11 and H35 to S36 contribute to the 4-CDP-2-C-methyl-D-erythritol 2-phosphate site. Residue H43 participates in a divalent metal cation binding. 4-CDP-2-C-methyl-D-erythritol 2-phosphate contacts are provided by residues D57 to G59, F62 to D66, T133 to E136, F140, and R143.

It belongs to the IspF family. In terms of assembly, homotrimer. The cofactor is a divalent metal cation.

It catalyses the reaction 4-CDP-2-C-methyl-D-erythritol 2-phosphate = 2-C-methyl-D-erythritol 2,4-cyclic diphosphate + CMP. The protein operates within isoprenoid biosynthesis; isopentenyl diphosphate biosynthesis via DXP pathway; isopentenyl diphosphate from 1-deoxy-D-xylulose 5-phosphate: step 4/6. Functionally, involved in the biosynthesis of isopentenyl diphosphate (IPP) and dimethylallyl diphosphate (DMAPP), two major building blocks of isoprenoid compounds. Catalyzes the conversion of 4-diphosphocytidyl-2-C-methyl-D-erythritol 2-phosphate (CDP-ME2P) to 2-C-methyl-D-erythritol 2,4-cyclodiphosphate (ME-CPP) with a corresponding release of cytidine 5-monophosphate (CMP). The chain is 2-C-methyl-D-erythritol 2,4-cyclodiphosphate synthase from Mannheimia succiniciproducens (strain KCTC 0769BP / MBEL55E).